The sequence spans 304 residues: MVKTAMLGAVALVIALGGTCGVADALPLGQTDDPMIVAHRAGTRDFPENTVLAITNAVAAGVDGMWLTVQVSSDGVPVLYRPSDLATLTDGAGPVNSKTVQQLQQLNAGWNFTTPGVEGHPYRQRATPIPTLEQAIGATPPDMTLFLDLKQTPPQPLVSAVAQVLTRTGAAGRSIVYSTNADITAAASRQEGLQVAESRDVTRQRLFNMALNHHCDPQPDPGKWAGFELHRDVTVTEEFTLGSGISAVNAELWDEASVDCFRSQSGMKVMGFAVKTVDDYRLAHKIGLDAVLVDSPLAAQQWRH.

A signal peptide spans 1–25 (MVKTAMLGAVALVIALGGTCGVADA). Residues 34–303 (PMIVAHRAGT…DSPLAAQQWR (270 aa)) enclose the GP-PDE domain.

This is an uncharacterized protein from Mycobacterium tuberculosis (strain CDC 1551 / Oshkosh).